The following is a 427-amino-acid chain: Terminal nucleotidyltransferase 5B (427 aa).

Positions 1-11 (MMPSESGDESL) are enriched in acidic residues. The disordered stretch occupies residues 1–46 (MMPSESGDESLEQPAAQVGTGAASAVATAGAAGGGPDLEASSASLG). Residues 15-30 (AAQVGTGAASAVATAG) are compositionally biased toward low complexity.

Belongs to the TENT family.

Its subcellular location is the cytoplasm. It localises to the nucleus. It catalyses the reaction RNA(n) + ATP = RNA(n)-3'-adenine ribonucleotide + diphosphate. Its function is as follows. Catalyzes the transfer of one adenosine molecule from an ATP to an mRNA poly(A) tail bearing a 3'-OH terminal group in an ATP hydrolysis-dependent manner. May be involved in maintaining the translation efficiency of at least some genes through preventing degradation of their mRNAs. Prefers RNA molecules that are adenosine-rich close to 3'-end. In addition, may inhibit cell proliferation and cell cycle progression through ubiquitination of beta-catenin/CTNNB1. In Rattus norvegicus (Rat), this protein is Terminal nucleotidyltransferase 5B.